We begin with the raw amino-acid sequence, 507 residues long: Bifunctional purine biosynthesis protein PurH (507 aa).

The MGS-like domain occupies 1–149; it reads MSESKRIKTA…KNYNDVIIVA (149 aa).

The protein belongs to the PurH family.

It catalyses the reaction (6R)-10-formyltetrahydrofolate + 5-amino-1-(5-phospho-beta-D-ribosyl)imidazole-4-carboxamide = 5-formamido-1-(5-phospho-D-ribosyl)imidazole-4-carboxamide + (6S)-5,6,7,8-tetrahydrofolate. The catalysed reaction is IMP + H2O = 5-formamido-1-(5-phospho-D-ribosyl)imidazole-4-carboxamide. The protein operates within purine metabolism; IMP biosynthesis via de novo pathway; 5-formamido-1-(5-phospho-D-ribosyl)imidazole-4-carboxamide from 5-amino-1-(5-phospho-D-ribosyl)imidazole-4-carboxamide (10-formyl THF route): step 1/1. It functions in the pathway purine metabolism; IMP biosynthesis via de novo pathway; IMP from 5-formamido-1-(5-phospho-D-ribosyl)imidazole-4-carboxamide: step 1/1. The chain is Bifunctional purine biosynthesis protein PurH from Bacteroides thetaiotaomicron (strain ATCC 29148 / DSM 2079 / JCM 5827 / CCUG 10774 / NCTC 10582 / VPI-5482 / E50).